The sequence spans 345 residues: Protein TRIGALACTOSYLDIACYLGLYCEROL 3, chloroplastic (345 aa).

The transit peptide at 1-46 (MLSLSCSSSSSSLLPPSLHYHGSSSVQSIVVPRRSLISFRRKVSCC) directs the protein to the chloroplast. An ABC transporter domain is found at 85-336 (IECRDVYKSF…TNPIVQQFAT (252 aa)). ATP is bound at residue 117–124 (GPSGTGKS).

This sequence belongs to the ABC transporter superfamily. ABCI family. In terms of assembly, catalytic subunit of the TGD complex, a lipid translocator at the inner chloroplast envelope membrane made of TGD1, TGD2 and TGD3. Interacts with TGD1 and TGD2 with an overall subunit stoichiometry of 2 TGD1, 2 TGD3 and 8 to 12 TGD2. Interacts with TGD5.

It localises to the plastid. The protein resides in the chloroplast stroma. Its function is as follows. ATPase transporter involved in lipid transfer from the endoplasmic reticulum (ER) to plastids, and necessary for thylakoids formation. Not involved in transition metal transport pathways. The sequence is that of Protein TRIGALACTOSYLDIACYLGLYCEROL 3, chloroplastic from Arabidopsis thaliana (Mouse-ear cress).